The sequence spans 536 residues: Xylulose kinase (536 aa).

Substrate-binding residues include His99, Arg170, Asp280, and Asn281. Residues Trp355, 441 to 442 (GA), and Asn445 each bind ATP.

This sequence belongs to the FGGY kinase family. As to quaternary structure, monomer.

It catalyses the reaction D-xylulose + ATP = D-xylulose 5-phosphate + ADP + H(+). Functionally, phosphorylates D-xylulose to produce D-xylulose 5-phosphate, a molecule that may play an important role in the regulation of glucose metabolism and lipogenesis. This is Xylulose kinase (XYLB) from Homo sapiens (Human).